The primary structure comprises 379 residues: Cyclin-dependent kinase-like 4 (379 aa).

The Protein kinase domain maps to 4–286 (YEKLAKTGEG…CSQLLESSYF (283 aa)). Residues 10–18 (TGEGSYGVV) and Lys33 contribute to the ATP site. The short motif at 45–51 (KKIALRE) is the [NKR]KIAxRE element. The active-site Proton acceptor is Asp126.

This sequence belongs to the protein kinase superfamily. CMGC Ser/Thr protein kinase family. CDC2/CDKX subfamily.

The protein resides in the cytoplasm. The enzyme catalyses L-seryl-[protein] + ATP = O-phospho-L-seryl-[protein] + ADP + H(+). It carries out the reaction L-threonyl-[protein] + ATP = O-phospho-L-threonyl-[protein] + ADP + H(+). The sequence is that of Cyclin-dependent kinase-like 4 (CDKL4) from Homo sapiens (Human).